The following is a 675-amino-acid chain: Protein REPRESSOR OF VERNALIZATION 1 (675 aa).

The tract at residues 1 to 143 is disordered; that stretch reads MGRRRRFTQQ…DPVKVTGKGK (143 aa). The span at 22–31 shows a compositional bias: low complexity; sequence AEPPKTAKPA. Over residues 48-70 the composition is skewed to acidic residues; the sequence is EEEDEDEEDELELEDEEDDEKDL. Residues 71 to 86 show a composition bias toward basic and acidic residues; it reads EEMRRNEEEERREETR. A Nuclear localization signal motif is present at residues 73–80; it reads MRRNEEEE. The span at 87 to 96 shows a compositional bias: basic residues; the sequence is TRRRRGRKPK. A compositionally biased stretch (acidic residues) spans 113 to 127; it reads SDEEEEEEVREEDST. Residues 157 to 275 enclose the BAH domain; it reads NTFELEDPVL…TVAKKLWNLT (119 aa). 3 disordered regions span residues 300 to 349, 493 to 512, and 587 to 675; these read ELPD…KPET, GLTPAEKTSEPEESRRLQMT, and LASP…ADHE. Basic and acidic residues-rich tracts occupy residues 333–346, 499–512, and 613–627; these read VSRDATGKSEHFVK, KTSEPEESRRLQMT, and KLEKQKSFTKPKPEE. The 147-residue stretch at 372 to 518 folds into the TFIIS central domain; sequence YRDKWLDKLL…LQMTDARCER (147 aa).

In terms of tissue distribution, expressed constitutively.

It is found in the nucleus. Component of a grass-specific mechanism of vernalization, a process by which prolonged cold exposure provides competence to flower in daylengths longer than 12 hours. Negative regulator of flowering required for vernalization establishment by repressing VRN1 before vernalization and in the fall season. This is Protein REPRESSOR OF VERNALIZATION 1 from Brachypodium distachyon (Purple false brome).